The following is a 438-amino-acid chain: Transcription termination factor Rho (438 aa).

Residues 70-145 form the Rho RNA-BD domain; it reads YILFTGILEI…LKIEAINYLP (76 aa). Residues 188 to 193, 200 to 205, and Arg231 each bind ATP; these read GKGQRA and RTGKTE.

The protein belongs to the Rho family. In terms of assembly, homohexamer. The homohexamer assembles into an open ring structure.

In terms of biological role, facilitates transcription termination by a mechanism that involves Rho binding to the nascent RNA, activation of Rho's RNA-dependent ATPase activity, and release of the mRNA from the DNA template. This Helicobacter pylori (strain J99 / ATCC 700824) (Campylobacter pylori J99) protein is Transcription termination factor Rho.